The primary structure comprises 1653 residues: MTSKKRKTLLDADDDNDNFDEDDSGSDFDDDEDPDQIEVPGGGRDLNTAVTYAQNIRSGVGVAPKGGIPIPISGAKIVVGNNKIKPISLLRINNNNNNIVTSVNNRNNNNIISTNGSSNNNNNSINNNSQIIKTTTVTTTPTTVGATPTVGGVALGGKLTVIPIAGRNVALDNNLSNMPKKLNNMVTAMGSPAARSSGNAGTTGSSQGGAIGSTSSYLNSLTTNELMNLAAYVAAKGSNAPPPPPPSTAANSVRHSPTGGIPNPGGNFFGGSAAASTSASAANFNMAASLLAQMSYAGGASQIRALKVAGNIGGVGNNQKPPPIATTPGSGGPAGGAPGSGVKGNNSMMEAVQKLIAMNPEYLTSGIPNTVFQMFMQSMQRPQATPSPNQPMNPGAMVTSAAAAAAHASAVAYVQQEEDEVDYEEMGVAETYADYWPAKLKLGKKHPDAVVETASLSSVEPCDVYYKLSLPLETINSGHLSALQLESITYASQAHDHLLPDGSRAGFLIGDGAGVGKGRTIAGIIYENYLKGRKKALWISVSNDLKYDAERDLSDIGATRIEVHALNKFKYAKISSDVNNNCKRGVIFSTYSALIGESNNKTGKYRSRFRQLLQWCGEDFEGLIIFDECHKAKNLCPVGSGKPTKTGQTVLELQQKLPKARVVYASATGASEPKNMAYMVRLGLWGQGTAFGNFNDFITAVERRGVGAMEIVAMDMKLRGMYIARQLSFKGVSFKIEEVPLSKEFRKIYDQSVELWVEAMQKFTEAAELIDAESRMKKTMWGQFWSSHQRFFKYLCIAAKVNHAVLVARESIKYGKCVVIGLQSTGEARTLDQLERDDGELTDFVSTAKGVFQSFVERHFPAPDRNRINRILGLYDETPSLSSVADSTSSLSNNSNITTAAGKRKGSNNNDNRSTKIKKKKRSGSWECSDSEDENTDMKRNRKRDGGNSNSDSDEANSDDDLKSDIDDEDEDHDVDSDQRSVASDASSDFNPFFSGSDSDIDPWVNARSKKSKKAQKKSKKKVKKEKTKKEITTSSATDPSGSTAMSATVVAALNAVKNRKSQLSTQDKIQDLLQKKQELKGTVTPVGVNGVKLNYGPPPKDAIERACTMKEELLRKIERLGARLPPNTLDQLIDELGGPDNVAEMTGRRGRVVQTDDGSIQYESRTESDVPLETLNITEKQRFMDGEKDVAIISEAASSGISLQSDRRVFNQRRRVHITLELPWSADRAIQQFGRTHRSNQVNAPEYIFLISDLAGERRFASTVAKRLESLGALTHGDRRATETRDLSQFNIDNKYGRQALETVMRTIMGYESPLVPPPTDYSGEFFKDIAGALVGVGIIVNSESHPGVLSLDKDYNNISKFLNRILGCPVDLQNRLFKYFTDTMTAIIQQAKRGGRFDLGILDLGAAGENVTRVRLIRFVRKHATGVAPTEMHTVRVERGMIWQEAIDKYADLFNENEGFYLSHQLRNQKRTAIMVVILESRNSSSTSSTTDLDSGSKKKKTHSKKEIMCQIYRPNTGLQVRHESLFELEKKYRKVASEEAEPHWTEQYDASVNTCSHAYWNGNCRNVSLGNDCEVGLRQRLYHVLAGSVLSVWGRVEHILNTRSNSKMQVIRMKTTEGEKIVGTLIPKSCFEPLVADLRSDSEKQEEFNY.

Disordered regions lie at residues 1 to 46 (MTSK…GRDL), 190 to 211 (GSPA…GGAI), 237 to 265 (GSNA…PNPG), 317 to 345 (NNQK…VKGN), and 883 to 1043 (SVAD…PSGS). Positions 11 to 36 (DADDDNDNFDEDDSGSDFDDDEDPDQ) are enriched in acidic residues. 2 positions are modified to phosphoserine: S24 and S26. A compositionally biased stretch (polar residues) spans 194–205 (ARSSGNAGTTGS). The span at 256–265 (SPTGGIPNPG) shows a compositional bias: low complexity. Residues 329 to 342 (GSGGPAGGAPGSGV) show a composition bias toward gly residues. The span at 883-901 (SVADSTSSLSNNSNITTAA) shows a compositional bias: low complexity. A phosphoserine mark is found at S929 and S931. Over residues 966–975 (IDDEDEDHDV) the composition is skewed to acidic residues. Positions 980-998 (RSVASDASSDFNPFFSGSD) are enriched in polar residues. Residues 1008-1027 (RSKKSKKAQKKSKKKVKKEK) are compositionally biased toward basic residues. Positions 1064 to 1125 (LSTQDKIQDL…RKIERLGARL (62 aa)) form a coiled coil.

The protein belongs to the SBNO family. In terms of assembly, interacts with vg for function in the wing disk. Interacts with Su(H) for function in the eye disk. At stage 8, when the formation of the midline precursor cells depends on Notch signaling, high level of expression is seen in the midline precursor cells and a lower level in the surrounding epidermal cells. Between stages 11 and 14, expression is uniform throughout the epidermis, and at stage 16, high level of expression is restricted to the central nervous system. Expressed in the larval leg, wing and eye imaginal disks. Expression is over the wing disk and accumulates within the pleural region.

It is found in the nucleus. Its function is as follows. Notch pathway component, may contribute to the specificity between lateral and inductive Notch signaling pathways in the wing disk. Required during many developmental stages including oogenesis, embryogenesis and imaginal development of the eye, wing and leg. Ebi and sno regulate EGFR-dependent Delta transcription in the developing eye, by antagonizing a repressor function of Suppressor of Hairless (Su(H)). They are required in the R-cells for normal cone cell development. The chain is Protein strawberry notch from Drosophila melanogaster (Fruit fly).